The chain runs to 603 residues: Ribosome-inactivating protein PMRIPt (603 aa).

The N-terminal stretch at 1–39 is a signal peptide; sequence MRVVAGILYIVVMAICGLGIQGGTLQDYPSVYFQDSTLQ. N-linked (GlcNAc...) asparagine glycosylation is found at Asn74 and Asn168. Glu208 is an active-site residue. Intrachain disulfides connect Cys297–Cys335, Cys351–Cys370, and Cys392–Cys409. Ricin B-type lectin domains follow at residues 338–466 and 467–593; these read GEPT…VGDD and VEPI…WMTM. One copy of the 1-alpha repeat lies at 348–388; that stretch reads DGLCMDVRNESNNDGIPIQLWPCGAQRNQQWTFHTDGTIQS. Residues Asn356 and Asn408 are each glycosylated (N-linked (GlcNAc...) asparagine). The 1-beta repeat unit spans residues 389 to 430; sequence MGKCMTSNGYHPGDYVMIFNCSTAPVPDATKWVVSIDGSITN. A 1-gamma repeat occupies 433–466; the sequence is SGLVLTAPQAAQTTILLVVRNTHSAKQGRSVGDD. The 2-alpha repeat unit spans residues 478 to 516; the sequence is KYMCLQGNNENNTRVWLEDCAVDRPQQWWALYSDGTIRV. 2 disulfides stabilise this stretch: Cys481–Cys497 and Cys523–Cys540. N-linked (GlcNAc...) asparagine glycosylation is present at Asn488. Residues 520-558 form a 2-beta repeat; it reads RSLCVTSDGHSSRDAIIILTCDGGINQRLVFNTDGTILN. One copy of the 2-gamma repeat lies at 561–597; that stretch reads AQLVMDVRQSNVALRQIILYQPTGNPNQQWMTMITRT.

The protein belongs to the ribosome-inactivating protein family. Type 2 RIP subfamily. Tetramer of four pairs of disulfide bound A-B chains. The precursor is processed in two chains, A and B, that are linked by a disulfide bond. In terms of processing, glycosylated. As to expression, expressed in rhizome and more abundantly in leaves (at protein level).

It catalyses the reaction Endohydrolysis of the N-glycosidic bond at one specific adenosine on the 28S rRNA.. With respect to regulation, strongly inhibited by asialofetuin and asialomucin. Its function is as follows. GalNAc-specific agglutinin. Behaves as a type-2 ribosome-inactivating protein. Inhibits mammalian ribosomes. The A chain is responsible for inhibiting protein synthesis through the catalytic inactivation of 60S ribosomal subunits by removing adenine from position 4,324 of 28S rRNA. The B chain binds to cell receptors and probably facilitates the entry into the cell of the A chain; B chains are also responsible for cell agglutination (lectin activity). Involved in plant defense against insects. Has very low cytotoxic activity against the human tumor cell lines CEM and Molt4. The polypeptide is Ribosome-inactivating protein PMRIPt (Polygonatum multiflorum (Solomon's seal)).